A 494-amino-acid chain; its full sequence is Aspartyl/glutamyl-tRNA(Asn/Gln) amidotransferase subunit B (494 aa).

Positions 475–494 (TSGRADPKATNQMLAKKLKG) are disordered.

Belongs to the GatB/GatE family. GatB subfamily. In terms of assembly, heterotrimer of A, B and C subunits.

The catalysed reaction is L-glutamyl-tRNA(Gln) + L-glutamine + ATP + H2O = L-glutaminyl-tRNA(Gln) + L-glutamate + ADP + phosphate + H(+). The enzyme catalyses L-aspartyl-tRNA(Asn) + L-glutamine + ATP + H2O = L-asparaginyl-tRNA(Asn) + L-glutamate + ADP + phosphate + 2 H(+). In terms of biological role, allows the formation of correctly charged Asn-tRNA(Asn) or Gln-tRNA(Gln) through the transamidation of misacylated Asp-tRNA(Asn) or Glu-tRNA(Gln) in organisms which lack either or both of asparaginyl-tRNA or glutaminyl-tRNA synthetases. The reaction takes place in the presence of glutamine and ATP through an activated phospho-Asp-tRNA(Asn) or phospho-Glu-tRNA(Gln). The polypeptide is Aspartyl/glutamyl-tRNA(Asn/Gln) amidotransferase subunit B (Acaryochloris marina (strain MBIC 11017)).